Consider the following 792-residue polypeptide: Phenylalanine--tRNA ligase beta subunit (792 aa).

The 109-residue stretch at 39–147 (AAAFSGVVVG…DNAPIGQDIR (109 aa)) folds into the tRNA-binding domain. Positions 400 to 475 (PERPAVRLRP…RLHGYDAIPA (76 aa)) constitute a B5 domain. Mg(2+) contacts are provided by Asp453, Asp459, Glu462, and Glu463. Residues 698–791 (SRQPAVTRDV…TETSLGARLR (94 aa)) form the FDX-ACB domain.

The protein belongs to the phenylalanyl-tRNA synthetase beta subunit family. Type 1 subfamily. As to quaternary structure, tetramer of two alpha and two beta subunits. Mg(2+) is required as a cofactor.

The protein localises to the cytoplasm. The enzyme catalyses tRNA(Phe) + L-phenylalanine + ATP = L-phenylalanyl-tRNA(Phe) + AMP + diphosphate + H(+). This is Phenylalanine--tRNA ligase beta subunit from Aromatoleum aromaticum (strain DSM 19018 / LMG 30748 / EbN1) (Azoarcus sp. (strain EbN1)).